The chain runs to 112 residues: Beta-defensin 126 (112 aa).

Positions 1 to 20 (MKSLLFTLAVFMLLAQLVSG) are cleaved as a signal peptide. The in vitro binds to LPS, mediates antimicrobial activity and inhibits LPS-mediated inflammation stretch occupies residues 21–63 (NWYVKKCLNDVGICKKKCKPEELHVKNGRAMCGKQRDCCVPAD). Intrachain disulfides connect cysteine 27-cysteine 58, cysteine 34-cysteine 52, and cysteine 38-cysteine 59.

Belongs to the beta-defensin family. Homodimer or homooligomer; disulfide-linked. In terms of processing, O-glycosylated; glycans contain alpha(2,3)-linked sialic acids.

It localises to the secreted. Functionally, highly glycosylated atypical beta-defensin involved in several aspects of sperm function. Facilitates sperm transport in the female reproductive tract and contributes to sperm protection against immunodetection; both functions are probably implicating the negative surface charge provided by its O-linked oligosaccharides in the sperm glycocalyx. Involved in binding of sperm to oviductal epithelial cells to form a sperm reservoir until ovulation. Release from the sperm surface during capacitation and ovaluation by an elevation of oviductal fluid pH is unmasking other surface components and allows sperm to penetrate the cumulus matrix and bind to the zona pellucida of the oocyte. In vitro has antimicrobial activity and may inhibit LPS-mediated inflammation. This chain is Beta-defensin 126 (DEFB126), found in Hylobates lar (Lar gibbon).